Reading from the N-terminus, the 600-residue chain is Proline--tRNA ligase (600 aa).

The protein belongs to the class-II aminoacyl-tRNA synthetase family. ProS type 1 subfamily. Homodimer.

It localises to the cytoplasm. The catalysed reaction is tRNA(Pro) + L-proline + ATP = L-prolyl-tRNA(Pro) + AMP + diphosphate. Catalyzes the attachment of proline to tRNA(Pro) in a two-step reaction: proline is first activated by ATP to form Pro-AMP and then transferred to the acceptor end of tRNA(Pro). As ProRS can inadvertently accommodate and process non-cognate amino acids such as alanine and cysteine, to avoid such errors it has two additional distinct editing activities against alanine. One activity is designated as 'pretransfer' editing and involves the tRNA(Pro)-independent hydrolysis of activated Ala-AMP. The other activity is designated 'posttransfer' editing and involves deacylation of mischarged Ala-tRNA(Pro). The misacylated Cys-tRNA(Pro) is not edited by ProRS. In Acaryochloris marina (strain MBIC 11017), this protein is Proline--tRNA ligase.